A 942-amino-acid chain; its full sequence is Inter alpha-trypsin inhibitor, heavy chain 4 (942 aa).

Residues 1–28 (MKSPAPAHMWNLVLFLPSLLAVLPTTTA) form the signal peptide. In terms of domain architecture, VIT spans 29 to 148 (EKNGIDIYSL…KITFELIYQE (120 aa)). Asparagine 81 carries an N-linked (GlcNAc...) asparagine glycan. The 184-residue stretch at 274-457 (NVIFVIDKSG…LQLQDFYHEV (184 aa)) folds into the VWFA domain. N-linked (GlcNAc...) asparagine glycosylation is found at asparagine 517 and asparagine 577. The stretch at 552-586 (TIQQQLEQRISASGAELEALEAQVLNLSLKYNFVT) forms a coiled coil. Disordered regions lie at residues 658–698 (RQYI…SDFS) and 726–745 (EKSKESTIPEESPNPDHPQV). The span at 663 to 690 (PGFPGPPGPPGFPAPPGPPGFPAPPGPP) shows a compositional bias: pro residues. Threonine 732 carries an O-linked (GalNAc...) threonine glycan. Cysteine 761 and cysteine 937 form a disulfide bridge. N-linked (GlcNAc...) asparagine glycosylation is present at asparagine 874.

It belongs to the ITIH family. As to quaternary structure, interacts (via C-terminus) with DNAJC1 (via SANT 2 domain). Post-translationally, may be O-glycosylated. N-glycosylated. As to expression, highly expressed in liver. Weak expression in lung and heart.

It localises to the secreted. In terms of biological role, type II acute-phase protein (APP) involved in inflammatory responses to trauma. May also play a role in liver development or regeneration. The chain is Inter alpha-trypsin inhibitor, heavy chain 4 (Itih4) from Mus musculus (Mouse).